Consider the following 151-residue polypeptide: Deoxyuridine 5'-triphosphate nucleotidohydrolase (151 aa).

Substrate is bound by residues 70 to 72, asparagine 83, 87 to 89, and methionine 97; these read RSG and LID.

It belongs to the dUTPase family. Mg(2+) is required as a cofactor.

The enzyme catalyses dUTP + H2O = dUMP + diphosphate + H(+). Its pathway is pyrimidine metabolism; dUMP biosynthesis; dUMP from dCTP (dUTP route): step 2/2. Functionally, this enzyme is involved in nucleotide metabolism: it produces dUMP, the immediate precursor of thymidine nucleotides and it decreases the intracellular concentration of dUTP so that uracil cannot be incorporated into DNA. The sequence is that of Deoxyuridine 5'-triphosphate nucleotidohydrolase from Pseudomonas fluorescens (strain ATCC BAA-477 / NRRL B-23932 / Pf-5).